The sequence spans 181 residues: Reverse rubrerythrin-1 (181 aa).

Positions 1-35 constitute a Rubredoxin-like domain; that stretch reads MKKFKCVVCGYIYTGEDAPEKCPVCGAGKDKFVEV. Fe cation is bound by residues C6, C9, C22, C25, E69, E102, E132, E165, and H168. One can recognise a Ferritin-like diiron domain in the interval 52–181; it reads KGVDKEVLEG…FRGLLNRYFK (130 aa).

Homodimer. Fe(3+) serves as cofactor.

The catalysed reaction is H2O2 + NADH + H(+) = NAD(+) + 2 H2O. Its function is as follows. Functions as the terminal component of an NADH peroxidase (NADH:H(2)O(2) oxidoreductase) when using NADH:rubredoxin oxidoreductase (NROR) and rubredoxin (Rd) as electron transport intermediaries from NADH to revRbr 1. Plays an important role in the oxidative stress defense system in C.acetobutylicum, an obligate anaerobic bacterium. Also exhibits NADH oxidase (NADH:O(2) oxidoreductase) activity in vitro, which is 100-fold lesser than that of FprA1/2 using the same electron transfer components. Therefore, its predominant function is most likely as a scavenger of its preferred substrate, H(2)O(2). The sequence is that of Reverse rubrerythrin-1 (rbr3A) from Clostridium acetobutylicum (strain ATCC 824 / DSM 792 / JCM 1419 / IAM 19013 / LMG 5710 / NBRC 13948 / NRRL B-527 / VKM B-1787 / 2291 / W).